Reading from the N-terminus, the 328-residue chain is Stress response kinase A (328 aa).

Asp-201 acts as the Proton acceptor in catalysis. Asn-206 and Asp-217 together coordinate Mg(2+). Asp-217 is an active-site residue.

It belongs to the SrkA/RdoA protein kinase family. Monomer. Mg(2+) serves as cofactor.

The protein localises to the cytoplasm. The enzyme catalyses L-seryl-[protein] + ATP = O-phospho-L-seryl-[protein] + ADP + H(+). It carries out the reaction L-threonyl-[protein] + ATP = O-phospho-L-threonyl-[protein] + ADP + H(+). A protein kinase that phosphorylates Ser and Thr residues. Probably acts to suppress the effects of stress linked to accumulation of reactive oxygen species. Probably involved in the extracytoplasmic stress response. In Escherichia coli O6:H1 (strain CFT073 / ATCC 700928 / UPEC), this protein is Stress response kinase A.